The primary structure comprises 314 residues: Methionyl-tRNA formyltransferase (314 aa).

113-116 contacts (6S)-5,6,7,8-tetrahydrofolate; sequence SLLP.

The protein belongs to the Fmt family.

The enzyme catalyses L-methionyl-tRNA(fMet) + (6R)-10-formyltetrahydrofolate = N-formyl-L-methionyl-tRNA(fMet) + (6S)-5,6,7,8-tetrahydrofolate + H(+). In terms of biological role, attaches a formyl group to the free amino group of methionyl-tRNA(fMet). The formyl group appears to play a dual role in the initiator identity of N-formylmethionyl-tRNA by promoting its recognition by IF2 and preventing the misappropriation of this tRNA by the elongation apparatus. This chain is Methionyl-tRNA formyltransferase, found in Pseudomonas aeruginosa (strain UCBPP-PA14).